A 470-amino-acid polypeptide reads, in one-letter code: Cannabinoid receptor 1 (470 aa).

Topologically, residues 1–121 are extracellular; sequence MKSILDGLAD…TPSQQLVIAA (121 aa). The interval 2-23 is required for mitochondrial localization; that stretch reads KSILDGLADTTFRTITTDLLYL. N-linked (GlcNAc...) asparagine glycosylation is found at Asn-78 and Asn-84. The chain crosses the membrane as a helical span at residues 122–142; it reads LSIILGTFTVLENMLVLVVIV. The Cytoplasmic segment spans residues 143-154; it reads QSRSLRCRPSYH. A helical transmembrane segment spans residues 155–175; that stretch reads FIGSLAVADLLGSVIFVYSFV. The Extracellular segment spans residues 176 to 187; that stretch reads DFHVFHRKDSPN. Residues 188-208 form a helical membrane-spanning segment; that stretch reads VFLFKLGGVTASFTASVGSLF. The Cytoplasmic segment spans residues 209–232; the sequence is LTAIDRYISIHRPMSYKRIVTRTK. Residues 233-253 traverse the membrane as a helical segment; it reads AVIAFCMMWTIAIVIAVLPLF. At 254-277 the chain is on the extracellular side; the sequence is GWNCIKLRSVCSDIFPLIDETYLM. The helical transmembrane segment at 278-298 threads the bilayer; the sequence is FWIGVTSVLLLFIVYAYMYIL. The Cytoplasmic segment spans residues 299–344; that stretch reads WKAHNHAVRMLQRGTQKSIIVHTSEDGKVHITRPDQTRMDIRLAKT. A helical membrane pass occupies residues 345–365; that stretch reads LVLILVVLIICWGPLMAIMVY. Topologically, residues 366–377 are extracellular; sequence DVFGKINKTIKT. An N-linked (GlcNAc...) asparagine glycan is attached at Asn-372. Residues 378 to 398 form a helical membrane-spanning segment; it reads VFAFCSVLCLLNSTVNPIIYA. Residues 399–470 are Cytoplasmic-facing; sequence LRSKDLRNAF…VSTDTSAEAV (72 aa). Cys-415 carries the S-palmitoyl cysteine lipid modification.

It belongs to the G-protein coupled receptor 1 family. In terms of processing, palmitoylation at Cys-415 is important for recruitment at both plasma membrane and lipid rafts and association with G protein alpha subunits. In terms of tissue distribution, expressed in neurons, especially in the olfactory bulbs, telencephalic pallium, and hypothalamus and also in the midbrain and hindbrain (in the mesencephalic tegmentum and dorsolateral rhombencephalon). Expressed also in the spinal cord.

Its subcellular location is the cell membrane. The protein localises to the mitochondrion outer membrane. The protein resides in the cell projection. It localises to the axon. It is found in the presynapse. Its function is as follows. G-protein coupled receptor for cannabinoids. Mediates many cannabinoid-induced effects in the central nervous system (CNS), as well as in peripheral tissues. Regulates cellular respiration and energy production in response to cannabinoids. Signaling typically involves reduction in cyclic AMP. This Xenopus laevis (African clawed frog) protein is Cannabinoid receptor 1 (cnr1).